A 154-amino-acid polypeptide reads, in one-letter code: MGLSDGEWQLVLNVWGKVEADIPGHGQEVLIRLFKDHPETLEKFDKFKHLKSEDEMKSSEDLKKHGTTVLTALGGILKKKGQHEAQLAPLAQSHANKHKIPVKYLEFISEAIIQVLKSKHAGDFGADAQGAMSKALELFRNDIAAKYKELGFQG.

The region spanning 2 to 148 (GLSDGEWQLV…FRNDIAAKYK (147 aa)) is the Globin domain. Residue serine 4 is modified to Phosphoserine. Residue histidine 65 coordinates nitrite. Position 65 (histidine 65) interacts with O2. A Phosphothreonine modification is found at threonine 68. A heme b-binding site is contributed by histidine 94.

Belongs to the globin family. In terms of assembly, monomeric.

Its subcellular location is the cytoplasm. It localises to the sarcoplasm. It catalyses the reaction Fe(III)-heme b-[protein] + nitric oxide + H2O = Fe(II)-heme b-[protein] + nitrite + 2 H(+). The catalysed reaction is H2O2 + AH2 = A + 2 H2O. Functionally, monomeric heme protein which primary function is to store oxygen and facilitate its diffusion within muscle tissues. Reversibly binds oxygen through a pentacoordinated heme iron and enables its timely and efficient release as needed during periods of heightened demand. Depending on the oxidative conditions of tissues and cells, and in addition to its ability to bind oxygen, it also has a nitrite reductase activity whereby it regulates the production of bioactive nitric oxide. Under stress conditions, like hypoxia and anoxia, it also protects cells against reactive oxygen species thanks to its pseudoperoxidase activity. The sequence is that of Myoglobin (MB) from Erinaceus europaeus (Western European hedgehog).